A 468-amino-acid chain; its full sequence is Adenosylhomocysteinase (468 aa).

Residues T63, D139, and E164 each coordinate substrate. An NAD(+)-binding site is contributed by 165–167; sequence TTT. The substrate site is built by K194 and D198. Residues N199, 228 to 233, E251, N300, 321 to 323, and N374 each bind NAD(+); these read GYGDVG and IGH.

Belongs to the adenosylhomocysteinase family. NAD(+) serves as cofactor.

The protein localises to the cytoplasm. The enzyme catalyses S-adenosyl-L-homocysteine + H2O = L-homocysteine + adenosine. It participates in amino-acid biosynthesis; L-homocysteine biosynthesis; L-homocysteine from S-adenosyl-L-homocysteine: step 1/1. Functionally, may play a key role in the regulation of the intracellular concentration of adenosylhomocysteine. The polypeptide is Adenosylhomocysteinase (Stutzerimonas stutzeri (strain A1501) (Pseudomonas stutzeri)).